A 363-amino-acid polypeptide reads, in one-letter code: Pyrimidine monooxygenase RutA (363 aa).

FMN is bound by residues 49–50 (IK), N115, E124, 140–141 (RY), and S190.

This sequence belongs to the NtaA/SnaA/DszA monooxygenase family. RutA subfamily.

It carries out the reaction uracil + FMNH2 + NADH + O2 = (Z)-3-ureidoacrylate + FMN + NAD(+) + H2O + H(+). It catalyses the reaction thymine + FMNH2 + NADH + O2 = (Z)-2-methylureidoacrylate + FMN + NAD(+) + H2O + H(+). In terms of biological role, catalyzes the pyrimidine ring opening between N-3 and C-4 by an unusual flavin hydroperoxide-catalyzed mechanism, adding oxygen atoms in the process to yield ureidoacrylate peracid, that immediately reacts with FMN forming ureidoacrylate and FMN-N(5)-oxide. The FMN-N(5)-oxide reacts spontaneously with NADH to produce FMN. Requires the flavin reductase RutF to regenerate FMN in vivo. This Escherichia coli O44:H18 (strain 042 / EAEC) protein is Pyrimidine monooxygenase RutA.